Consider the following 215-residue polypeptide: MRVILLGAPGAGKGTQAKFITEKFGIPQISTGDMLRAAVKAGTELGLIAKSVMDSGGLVSDDLIINLVKERISQEDCKNGFLFDGFPRTIPQAEALVKAGVELDAVVEIAVEDEEIVQRIAGRRVHEASGRVYHTVYNPPKVEGKDDVTGDDLVQRKDDTEETVRHRLSVYHSQTKPLVDFYQKLSAAQGKPKYSHIPGVGSVEAITAKVLQALS.

10–15 (GAGKGT) contacts ATP. Residues 30–59 (STGDMLRAAVKAGTELGLIAKSVMDSGGLV) are NMP. AMP is bound by residues Thr-31, Arg-36, 57 to 59 (GLV), 85 to 88 (GFPR), and Gln-92. An LID region spans residues 122–159 (GRRVHEASGRVYHTVYNPPKVEGKDDVTGDDLVQRKDD). Residues Arg-123 and 132–133 (VY) contribute to the ATP site. Positions 156 and 167 each coordinate AMP. Gly-201 lines the ATP pocket.

Belongs to the adenylate kinase family. As to quaternary structure, monomer.

The protein localises to the cytoplasm. It carries out the reaction AMP + ATP = 2 ADP. It functions in the pathway purine metabolism; AMP biosynthesis via salvage pathway; AMP from ADP: step 1/1. Catalyzes the reversible transfer of the terminal phosphate group between ATP and AMP. Plays an important role in cellular energy homeostasis and in adenine nucleotide metabolism. The polypeptide is Adenylate kinase (Pseudomonas fluorescens (strain SBW25)).